Consider the following 384-residue polypeptide: Mannitol-1-phosphate 5-dehydrogenase (384 aa).

4-15 is an NAD(+) binding site; it reads AVHFGAGNIGRG.

Belongs to the mannitol dehydrogenase family.

It catalyses the reaction D-mannitol 1-phosphate + NAD(+) = beta-D-fructose 6-phosphate + NADH + H(+). The protein is Mannitol-1-phosphate 5-dehydrogenase of Lacticaseibacillus paracasei (strain ATCC 334 / BCRC 17002 / CCUG 31169 / CIP 107868 / KCTC 3260 / NRRL B-441) (Lactobacillus paracasei).